The primary structure comprises 453 residues: Insulinoma-associated protein 1b (453 aa).

Positions 1–20 are SNAG domain; the sequence is MPKGFLVKRNKKAALVSYRI. A disordered region spans residues 140–179; that stretch reads NSNRSGTASGAHAPAIQTGAKRPSADAAERKVSSKSAKKP. Residues 162–171 show a composition bias toward basic and acidic residues; that stretch reads PSADAAERKV. The C2H2-type 1 zinc finger occupies 252 to 274; sequence YRCPECEKVFSCPANLASHRRWH. The interval 298–318 is disordered; that stretch reads AEFPSDRDTPSPGLSESGSED. 3 C2H2-type zinc fingers span residues 321-343, 383-406, and 412-435; these read YDCQ…ILGH, LTCP…RLLH, and FPCK…NKCH.

The protein belongs to the INSM1 family.

Its subcellular location is the nucleus. Functionally, may act as a transcriptional regulator. May play a role in neurogenesis and neuroendocrine cell differentiation during embryonic development. This is Insulinoma-associated protein 1b (insm1b) from Danio rerio (Zebrafish).